The following is a 377-amino-acid chain: Palmitoyltransferase ZDHHC16 (377 aa).

Topologically, residues 1 to 77 (MRGQRSLLLG…VYWLVDNVIR (77 aa)) are cytoplasmic. A helical membrane pass occupies residues 78–98 (WFGVVFVVLVIVLTGSIVAIA). At 99–116 (YLCVLPLILRTYSVPRLC) the chain is on the lumenal side. The helical transmembrane segment at 117–137 (WHFFYSHWNLILIVFHYYQAI) threads the bilayer. The Cytoplasmic segment spans residues 138-198 (TTPPGYPPQG…NNCVGHYNHR (61 aa)). One can recognise a DHHC domain in the interval 155–205 (SICKKCIYPKPARTHHCSICNRCVLKMDHHCPWLNNCVGHYNHRYFFSFCF). Cysteine 185 (S-palmitoyl cysteine intermediate) is an active-site residue. A helical membrane pass occupies residues 199-219 (YFFSFCFFMTLGCVYCSYGSW). Topologically, residues 220-266 (DLFREAYAAIEKMKQLDKNKLQAVANQTYHQTPPPIFSFRERMTHKS) are lumenal. A helical membrane pass occupies residues 267–287 (LVYLWFLCSSVALALGALTVW). At 288 to 377 (HAVLISRGET…TAHSASVMAV (90 aa)) the chain is on the cytoplasmic side.

It belongs to the DHHC palmitoyltransferase family. In terms of assembly, interacts with ABL1. Interacts with COPS5/JAB1.

Its subcellular location is the endoplasmic reticulum membrane. It carries out the reaction L-cysteinyl-[protein] + hexadecanoyl-CoA = S-hexadecanoyl-L-cysteinyl-[protein] + CoA. In terms of biological role, palmitoyl acyltransferase that mediates palmitoylation of proteins such as PLN and ZDHHC6. Required during embryonic heart development and cardiac function, possibly by mediating palmitoylation of PLN, thereby affecting PLN phosphorylation and homooligomerization. Also required for eye development. Palmitoylates ZDHHC6, affecting the quaternary assembly of ZDHHC6, its localization, stability and function. May play a role in DNA damage response. May be involved in apoptosis regulation. Involved in the proliferation of neural stem cells by regulating the FGF/ERK pathway. The chain is Palmitoyltransferase ZDHHC16 from Macaca fascicularis (Crab-eating macaque).